The following is a 197-amino-acid chain: Imidazoleglycerol-phosphate dehydratase (197 aa).

The protein belongs to the imidazoleglycerol-phosphate dehydratase family.

It localises to the cytoplasm. The enzyme catalyses D-erythro-1-(imidazol-4-yl)glycerol 3-phosphate = 3-(imidazol-4-yl)-2-oxopropyl phosphate + H2O. It participates in amino-acid biosynthesis; L-histidine biosynthesis; L-histidine from 5-phospho-alpha-D-ribose 1-diphosphate: step 6/9. This chain is Imidazoleglycerol-phosphate dehydratase, found in Thermobifida fusca (strain YX).